A 259-amino-acid polypeptide reads, in one-letter code: uncharacterized protein (259 aa).

In terms of domain architecture, ABC transporter spans 4-243 (INLKNINLTR…KILTDFYQEK (240 aa)). An ATP-binding site is contributed by 36-43 (GLNGSGKS).

This sequence belongs to the ABC transporter superfamily.

This is an uncharacterized protein from Lactococcus lactis subsp. lactis (strain IL1403) (Streptococcus lactis).